The following is a 279-amino-acid chain: Phycobilisome rod-core linker polypeptide CpcG1 (279 aa).

Residues 11-189 (TTQNQRVEGY…YWRNRLLEQF (179 aa)) enclose the PBS-linker domain.

The protein belongs to the phycobilisome linker protein family. The phycobilisome is a hemidiscoidal structure that is composed of two distinct substructures: a core complex and a number of rods radiating from the core.

Its subcellular location is the cellular thylakoid membrane. Functionally, rod-core linker protein required for attachment of phycocyanin to allophycocyanin in cores of phycobilisomes. In terms of biological role, linker polypeptides determine the state of aggregation and the location of the disk-shaped phycobiliprotein units within the phycobilisome and modulate their spectroscopic properties in order to mediate a directed and optimal energy transfer. In Mastigocladus laminosus (Fischerella sp.), this protein is Phycobilisome rod-core linker polypeptide CpcG1 (cpcG1).